Reading from the N-terminus, the 367-residue chain is MEAEVINQLNNTLNDLEKRSEDIRVYMDYQGKKDRLEEVIGLSEDPELWNDPKRAQEIGKERKILEGIVLTLDNIASGIEDNRMLIEMTVEENDEEGFAAVQEDVAGLEKQMADLEFKRMFNQPADPNNCFIDITAGAGGTEAEDWAGMLFRMYSRYAERKGFKIEILEEDDGEIAGINRATIRVEGEYAYGLLRTETGVHRLVRYSPFDSNNKRHTSFASVFVYPEIDDSIEIEINPADLRIDTYRASGAGGQHINKTDSAVRITHEPTGIVVQCQNDRSQHANKAAAMEMLKSKLYELEMRKRNEEKQALEEGKSDVGWGSQIRSYVLDSSRIKDLRTGYEVGNTKAVLDGDLDGFIEASLKQGV.

The residue at position 254 (glutamine 254) is an N5-methylglutamine.

Belongs to the prokaryotic/mitochondrial release factor family. Post-translationally, methylated by PrmC. Methylation increases the termination efficiency of RF2.

It is found in the cytoplasm. Its function is as follows. Peptide chain release factor 2 directs the termination of translation in response to the peptide chain termination codons UGA and UAA. The polypeptide is Peptide chain release factor 2 (Neisseria meningitidis serogroup C / serotype 2a (strain ATCC 700532 / DSM 15464 / FAM18)).